The primary structure comprises 21 residues: Peptide PGLa-B2 (21 aa).

L21 is modified (leucine amide).

Expressed by the skin glands.

The protein resides in the secreted. Its function is as follows. Has antimicrobial activity against Gram-negative bacterium E.coli ATCC 25922 (MIC=25 uM), Gram-positive bacterium S.auerus ATCC 25923 (MIC=50 uM) and against fungus C.albicans ATCC 90028 (MIC=25 uM). Has some hemolytic activity against human erythrocytes at high concentration. This chain is Peptide PGLa-B2, found in Xenopus borealis (Kenyan clawed frog).